The chain runs to 836 residues: Neuroligin-2 (836 aa).

An N-terminal signal peptide occupies residues 1–14; that stretch reads MWLLALCLVGLAGA. Residues 15–678 lie on the Extracellular side of the membrane; sequence QRGGGGPGGG…DSRDYSTELS (664 aa). N-linked (GlcNAc...) asparagine glycosylation is found at asparagine 98 and asparagine 136. 3 cysteine pairs are disulfide-bonded: cysteine 106-cysteine 141, cysteine 317-cysteine 328, and cysteine 487-cysteine 521. The N-linked (GlcNAc...) asparagine glycan is linked to asparagine 522. Residues 623–661 form a disordered region; sequence PPYATRWPPRTPGPGTSGTRRPPPPATLPPESDIDLGPR. A helical transmembrane segment spans residues 679 to 699; it reads VTVAVGASLLFLNILAFAALY. The tract at residues 679–699 is required for interaction with LHFPL4; that stretch reads VTVAVGASLLFLNILAFAALY. Over 700-836 the chain is Cytoplasmic; sequence YKRDRRQELR…LPHPHSTTRV (137 aa). Disordered stretches follow at residues 711–735 and 791–836; these read RRLSPPGGSGSGVPGGGPLLPTAGR and LLPS…TTRV. Residues serine 714 and serine 719 each carry the phosphoserine modification. A compositionally biased stretch (gly residues) spans 717 to 728; that stretch reads GGSGSGVPGGGP. The segment covering 796–819 has biased composition (pro residues); that stretch reads LGPPPPPPPPSLHPFGPFPPPPPT. Polar residues predominate over residues 824 to 836; sequence NNTLPHPHSTTRV.

This sequence belongs to the type-B carboxylesterase/lipase family. In terms of assembly, interacts with neurexins NRXN1, NRXN2 and NRXN3. Interaction with neurexins is mediated by heparan sulfate glycan modification on neurexin. Interacts (via its C-terminus) with DLG4/PSD-95 (via PDZ domain 3). Interacts with PATJ. Interacts with MDGA2. Interacts with GPHN. Interacts with MDGA1. Found in a complex with MAGI2 and IGSF9B, where it interacts with MAGI2 (via WW 1, WW 2 and PDZ 2 domains). Identified in a complex of 720 kDa composed of LHFPL4, NLGN2, GABRA1, GABRB2, GABRG2 and GABRB3. Interacts with LHFPL4; leading to mutual regulation of the protein level and synaptic clustering. Interacts with GABRA1. In terms of tissue distribution, brain and arteries. Detected in the retina outer plexiform layer (at protein level). Widely expressed. Detected in heart, brain, spleen, lung, liver, skeletal muscle, kidney and testis.

The protein localises to the cell membrane. The protein resides in the postsynaptic cell membrane. It localises to the presynaptic cell membrane. Its function is as follows. Transmembrane scaffolding protein involved in cell-cell interactions via its interactions with neurexin family members. Mediates cell-cell interactions both in neurons and in other types of cells, such as Langerhans beta cells. Mediates cell-cell interactions between Langerhans beta cells and modulates insulin secretion. Plays a role in synapse function and synaptic signal transmission, especially via gamma-aminobutyric acid receptors (GABA(A) receptors). Functions by recruiting and clustering synaptic proteins. Promotes clustering of postsynaptic GABRG2 and GPHN. Promotes clustering of postsynaptic LHFPL4. Modulates signaling by inhibitory synapses, and thereby plays a role in controlling the ratio of signaling by excitatory and inhibitory synapses and information processing. Required for normal signal amplitude from inhibitory synapses, but is not essential for normal signal frequency. May promote the initial formation of synapses, but is not essential for this. In vitro, triggers the de novo formation of presynaptic structures. This is Neuroligin-2 (Nlgn2) from Mus musculus (Mouse).